A 745-amino-acid polypeptide reads, in one-letter code: Serine/threonine-protein kinase BUR1 (745 aa).

The disordered stretch occupies residues Met-1–Pro-21. The 306-residue stretch at Tyr-44 to Phe-349 folds into the Protein kinase domain. ATP-binding positions include Leu-50 to Val-58 and Lys-73. Catalysis depends on Asp-179, which acts as the Proton acceptor. Composition is skewed to basic and acidic residues over residues Asp-380–Ala-406, Asp-428–Asn-475, and Lys-493–Asp-508. The segment at Asp-380 to Asp-701 is disordered. The span at Ser-516 to Lys-534 shows a compositional bias: low complexity. A compositionally biased stretch (basic and acidic residues) spans Ala-547–Gln-557. 2 stretches are compositionally biased toward polar residues: residues Val-558–Asp-567 and Leu-586–Asn-598. Positions Lys-599–Val-631 are enriched in basic and acidic residues. The span at Lys-632–Ser-660 shows a compositional bias: low complexity. Polar residues predominate over residues Asn-661–Thr-674. Over residues Glu-692 to Asp-701 the composition is skewed to acidic residues.

The protein belongs to the protein kinase superfamily. CMGC Ser/Thr protein kinase family. CDC2/CDKX subfamily.

The protein resides in the nucleus. It carries out the reaction L-seryl-[protein] + ATP = O-phospho-L-seryl-[protein] + ADP + H(+). The catalysed reaction is L-threonyl-[protein] + ATP = O-phospho-L-threonyl-[protein] + ADP + H(+). It catalyses the reaction [DNA-directed RNA polymerase] + ATP = phospho-[DNA-directed RNA polymerase] + ADP + H(+). Its function is as follows. Serine/threonine-protein kinase involved in transcription regulation. Phosphorylates the UBC2/RAD6 ubiquitin-conjugating enzyme (E2), leading to monoubiquitination of histone H2B and the silencing of telomeric-associated genes. Also required for histone H3 methylation. Necessary for the recovery from pheromone-induced growth arrest in the cell cycle G1 phase. Required for pseudohyphal growth and virulence in mice. This chain is Serine/threonine-protein kinase BUR1 (CRK1), found in Candida albicans (strain SC5314 / ATCC MYA-2876) (Yeast).